The sequence spans 95 residues: Large ribosomal subunit protein bL31 (95 aa).

Residues 68–95 form a disordered region; the sequence is AGLNNINKKPEKKKIQGKSEPRKSLNEL. Over residues 80-95 the composition is skewed to basic and acidic residues; the sequence is KKIQGKSEPRKSLNEL.

Belongs to the bacterial ribosomal protein bL31 family. Type A subfamily. In terms of assembly, part of the 50S ribosomal subunit.

Functionally, binds the 23S rRNA. In Ureaplasma parvum serovar 3 (strain ATCC 700970), this protein is Large ribosomal subunit protein bL31.